We begin with the raw amino-acid sequence, 331 residues long: Decarboxylase orsB (331 aa).

Residues H11, H157, and D284 each contribute to the Zn(2+) site.

It belongs to the metallo-dependent hydrolases superfamily. ACMSD family.

The protein operates within secondary metabolite biosynthesis. Functionally, decarboxylase; part of the gene cluster that mediates the biosynthesis of orsellinic acid, as well as of the cathepsin K inhibitors F9775 A and F9775 B. The non-reducing polyketide synthase orsA produces orsellinic acid by condensing acetyl-CoA with 3 malonyl-CoA units. Further modifications by the decarboxylase orsB and the tyrosinase-like protein orsC lead to the production of F9775 A and F9775 B. The functions of orsD and orsE remain unclear since only orsB and orsC are required to convert orsellinic acid into F9775 A and F9775 B. The polypeptide is Decarboxylase orsB (Emericella nidulans (strain FGSC A4 / ATCC 38163 / CBS 112.46 / NRRL 194 / M139) (Aspergillus nidulans)).